The chain runs to 108 residues: Putative pterin-4-alpha-carbinolamine dehydratase (108 aa).

It belongs to the pterin-4-alpha-carbinolamine dehydratase family.

It catalyses the reaction (4aS,6R)-4a-hydroxy-L-erythro-5,6,7,8-tetrahydrobiopterin = (6R)-L-erythro-6,7-dihydrobiopterin + H2O. This is Putative pterin-4-alpha-carbinolamine dehydratase from Chromobacterium violaceum (strain ATCC 12472 / DSM 30191 / JCM 1249 / CCUG 213 / NBRC 12614 / NCIMB 9131 / NCTC 9757 / MK).